The primary structure comprises 856 residues: Subtilisin-like protease SBT2.2 (856 aa).

Positions 1–21 (MRRVLMVNFGVLLLFCFGVLS) are cleaved as a signal peptide. The propeptide at 22 to 159 (NSFGQDNGGD…IVLDFSVRTA (138 aa)) is activation peptide. N-linked (GlcNAc...) asparagine glycosylation is found at asparagine 35 and asparagine 85. An Inhibitor I9 domain is found at 40–159 (VYIVTLRQAS…IVLDFSVRTA (120 aa)). A Peptidase S8 domain is found at 164–709 (PQFMGLPKGA…NGFVNATAAL (546 aa)). Aspartate 193 acts as the Charge relay system in catalysis. N-linked (GlcNAc...) asparagine glycans are attached at residues asparagine 204 and asparagine 255. The Charge relay system role is filled by histidine 269. Asparagine 412, asparagine 441, asparagine 495, asparagine 540, and asparagine 568 each carry an N-linked (GlcNAc...) asparagine glycan. Positions 432-528 (MISALDALKN…MDMPGIIIPS (97 aa)) constitute a PA domain. Serine 634 serves as the catalytic Charge relay system. Residues asparagine 704, asparagine 730, asparagine 738, asparagine 748, asparagine 767, asparagine 782, and asparagine 823 are each glycosylated (N-linked (GlcNAc...) asparagine).

This sequence belongs to the peptidase S8 family.

It is found in the secreted. This chain is Subtilisin-like protease SBT2.2, found in Arabidopsis thaliana (Mouse-ear cress).